A 563-amino-acid chain; its full sequence is Group II intron-interrupted relaxase LtrB (563 aa).

The active site involves Y44. Positions 159 and 161 each coordinate Mg(2+).

The protein belongs to the mobilization (MOB) protein type 1 family. The cofactor is Mg(2+). It depends on Mn(2+) as a cofactor.

Mediates initiation of conjugal transfer possibly by introducing a single-stranded nick at the potential origin of transfer. This is Group II intron-interrupted relaxase LtrB (ltrBE1) from Lactococcus lactis subsp. cremoris (strain MG1363).